The primary structure comprises 142 residues: Protein-export protein SecB (142 aa).

Belongs to the SecB family. In terms of assembly, homotetramer, a dimer of dimers. One homotetramer interacts with 1 SecA dimer.

The protein resides in the cytoplasm. One of the proteins required for the normal export of preproteins out of the cell cytoplasm. It is a molecular chaperone that binds to a subset of precursor proteins, maintaining them in a translocation-competent state. It also specifically binds to its receptor SecA. The chain is Protein-export protein SecB from Buchnera aphidicola subsp. Acyrthosiphon pisum (strain 5A).